A 329-amino-acid chain; its full sequence is Phosphate acyltransferase (329 aa).

It belongs to the PlsX family. Homodimer. Probably interacts with PlsY.

The protein localises to the cytoplasm. The enzyme catalyses a fatty acyl-[ACP] + phosphate = an acyl phosphate + holo-[ACP]. It participates in lipid metabolism; phospholipid metabolism. In terms of biological role, catalyzes the reversible formation of acyl-phosphate (acyl-PO(4)) from acyl-[acyl-carrier-protein] (acyl-ACP). This enzyme utilizes acyl-ACP as fatty acyl donor, but not acyl-CoA. This chain is Phosphate acyltransferase, found in Campylobacter concisus (strain 13826).